Reading from the N-terminus, the 200-residue chain is Pyridoxamine 5'-phosphate oxidase homolog (200 aa).

FMN contacts are provided by F60, K68, and N125.

This sequence belongs to the pyridoxamine 5'-phosphate oxidase family. It depends on FMN as a cofactor.

Its subcellular location is the cytoplasm. It localises to the nucleus. The protein is Pyridoxamine 5'-phosphate oxidase homolog of Saccharomyces cerevisiae (strain ATCC 204508 / S288c) (Baker's yeast).